We begin with the raw amino-acid sequence, 281 residues long: Eukaryotic translation initiation factor 3 subunit G (281 aa).

The interval 1–32 (MSRPAGRTDWAEEDDETELALPSQTVVKNKDG) is disordered. An RRM domain is found at 202–280 (ATLRVTNVSE…LILRVEFAKK (79 aa)).

This sequence belongs to the eIF-3 subunit G family. Component of the eukaryotic translation initiation factor 3 (eIF-3) complex.

Its subcellular location is the cytoplasm. RNA-binding component of the eukaryotic translation initiation factor 3 (eIF-3) complex, which is involved in protein synthesis of a specialized repertoire of mRNAs and, together with other initiation factors, stimulates binding of mRNA and methionyl-tRNAi to the 40S ribosome. The eIF-3 complex specifically targets and initiates translation of a subset of mRNAs involved in cell proliferation. This subunit can bind 18S rRNA. In Phaeosphaeria nodorum (strain SN15 / ATCC MYA-4574 / FGSC 10173) (Glume blotch fungus), this protein is Eukaryotic translation initiation factor 3 subunit G.